A 323-amino-acid polypeptide reads, in one-letter code: MKVSIIGAGMVGSSIAYATMIKGVAREISIVDINGDLAEGQALDLSHGAPYVHPVRIKGGNDYSLTKNSDVVVITAGRAQKPGETRLQLLKSNAKIISSIVESCLKYSENPIILMVSNPVDVLTWVAWKKSGLPRERIIGSGTTLDTARLRQNIADHCKLDPRSVHAYIIGEHGDSEIASWSTANVGGVPIKEFCNGCLAKGCERDKVFERIFENTRDAAYKIIEKKGATYYGIGLAVARILETIAGDHHSVLTVSSVHEEFRGMRDVPFSVPSVLGKKGIERILPLKLSDDELKGLENSAKVIKAAIESILENREPRAENPR.

NAD(+) is bound by residues V11, D32, and Y63. Substrate contacts are provided by Q80 and R86. Residues S99, 116–118, and S141 contribute to the NAD(+) site; that span reads VSN. 118–121 contacts substrate; it reads NPVD. 146 to 149 lines the substrate pocket; it reads DTAR. The beta-D-fructose 1,6-bisphosphate site is built by R151 and H166. H173 functions as the Proton acceptor in the catalytic mechanism. Position 221 is a phosphotyrosine (Y221). A substrate-binding site is contributed by T230.

It belongs to the LDH/MDH superfamily. LDH family. In terms of assembly, homotetramer.

The protein localises to the cytoplasm. It carries out the reaction (S)-lactate + NAD(+) = pyruvate + NADH + H(+). The protein operates within fermentation; pyruvate fermentation to lactate; (S)-lactate from pyruvate: step 1/1. With respect to regulation, allosterically activated by fructose 1,6-bisphosphate (FBP). In terms of biological role, catalyzes the conversion of lactate to pyruvate. The protein is L-lactate dehydrogenase of Kosmotoga olearia (strain ATCC BAA-1733 / DSM 21960 / TBF 19.5.1).